The sequence spans 476 residues: Bifunctional protein HldE (476 aa).

The interval 1-318 (MKLDLTVLEQ…YTALHGDKLA (318 aa)) is ribokinase. 195 to 198 (NLGE) is a binding site for ATP. Aspartate 264 is an active-site residue. Residues 344-476 (MTNGCFDILH…MIDTILDREG (133 aa)) are cytidylyltransferase.

In the N-terminal section; belongs to the carbohydrate kinase PfkB family. The protein in the C-terminal section; belongs to the cytidylyltransferase family. Homodimer.

It carries out the reaction D-glycero-beta-D-manno-heptose 7-phosphate + ATP = D-glycero-beta-D-manno-heptose 1,7-bisphosphate + ADP + H(+). The enzyme catalyses D-glycero-beta-D-manno-heptose 1-phosphate + ATP + H(+) = ADP-D-glycero-beta-D-manno-heptose + diphosphate. The protein operates within nucleotide-sugar biosynthesis; ADP-L-glycero-beta-D-manno-heptose biosynthesis; ADP-L-glycero-beta-D-manno-heptose from D-glycero-beta-D-manno-heptose 7-phosphate: step 1/4. Its pathway is nucleotide-sugar biosynthesis; ADP-L-glycero-beta-D-manno-heptose biosynthesis; ADP-L-glycero-beta-D-manno-heptose from D-glycero-beta-D-manno-heptose 7-phosphate: step 3/4. Its function is as follows. Catalyzes the phosphorylation of D-glycero-D-manno-heptose 7-phosphate at the C-1 position to selectively form D-glycero-beta-D-manno-heptose-1,7-bisphosphate. In terms of biological role, catalyzes the ADP transfer from ATP to D-glycero-beta-D-manno-heptose 1-phosphate, yielding ADP-D-glycero-beta-D-manno-heptose. This is Bifunctional protein HldE from Chromohalobacter salexigens (strain ATCC BAA-138 / DSM 3043 / CIP 106854 / NCIMB 13768 / 1H11).